The sequence spans 339 residues: Beta-ketoacyl-[acyl-carrier-protein] synthase III (339 aa).

Residues cysteine 121 and histidine 257 contribute to the active site. The tract at residues 258–262 (QANLR) is ACP-binding. Residue asparagine 288 is part of the active site.

This sequence belongs to the thiolase-like superfamily. FabH family. Homodimer.

It is found in the cytoplasm. The catalysed reaction is malonyl-[ACP] + propanoyl-CoA + H(+) = 3-oxopentanoyl-[ACP] + CO2 + CoA. It carries out the reaction 2-methylpropanoyl-CoA + malonyl-[ACP] + H(+) = 4-methyl-3-oxopentanoyl-[ACP] + CO2 + CoA. The enzyme catalyses malonyl-[ACP] + acetyl-CoA + H(+) = 3-oxobutanoyl-[ACP] + CO2 + CoA. It catalyses the reaction butanoyl-CoA + malonyl-[ACP] + H(+) = 3-oxohexanoyl-[ACP] + CO2 + CoA. It functions in the pathway lipid metabolism; fatty acid biosynthesis. Catalyzes the condensation reaction of fatty acid synthesis by the addition to an acyl acceptor of two carbons from malonyl-ACP. Catalyzes the first condensation reaction which initiates fatty acid synthesis and may therefore play a role in governing the total rate of fatty acid production. Possesses both acetoacetyl-ACP synthase and acetyl transacylase activities. Propionyl-CoA and isobutyryl-CoA were the two most preferred substrates, although acetyl-CoA and butyryl-CoA could also be accepted and elongated. Involved in the biosynthesis of R1128 polyketide. The protein is Beta-ketoacyl-[acyl-carrier-protein] synthase III of Streptomyces lividans.